We begin with the raw amino-acid sequence, 239 residues long: Uridylate kinase (239 aa).

ATP is bound at residue 10–13 (KFSG). Positions 18 to 23 (GENGFG) are involved in allosteric activation by GTP. Gly52 lines the UMP pocket. ATP contacts are provided by Gly53 and Arg57. UMP contacts are provided by residues Asp73 and 134–141 (TGNPYFTT). ATP is bound by residues Thr161, Tyr167, and Asp170.

The protein belongs to the UMP kinase family. Homohexamer.

The protein localises to the cytoplasm. It catalyses the reaction UMP + ATP = UDP + ADP. The protein operates within pyrimidine metabolism; CTP biosynthesis via de novo pathway; UDP from UMP (UMPK route): step 1/1. Allosterically activated by GTP. Inhibited by UTP. Functionally, catalyzes the reversible phosphorylation of UMP to UDP. This Campylobacter jejuni subsp. doylei (strain ATCC BAA-1458 / RM4099 / 269.97) protein is Uridylate kinase.